We begin with the raw amino-acid sequence, 310 residues long: Quinolinate synthase (310 aa).

Iminosuccinate contacts are provided by histidine 27 and serine 44. Cysteine 89 provides a ligand contact to [4Fe-4S] cluster. Residues 115–117 (YVN) and serine 132 each bind iminosuccinate. Cysteine 175 contributes to the [4Fe-4S] cluster binding site. Residues 201-203 (HPE) and threonine 222 contribute to the iminosuccinate site. Residue cysteine 267 coordinates [4Fe-4S] cluster.

Belongs to the quinolinate synthase family. Type 2 subfamily. The cofactor is [4Fe-4S] cluster.

It is found in the cytoplasm. It catalyses the reaction iminosuccinate + dihydroxyacetone phosphate = quinolinate + phosphate + 2 H2O + H(+). It functions in the pathway cofactor biosynthesis; NAD(+) biosynthesis; quinolinate from iminoaspartate: step 1/1. Its function is as follows. Catalyzes the condensation of iminoaspartate with dihydroxyacetone phosphate to form quinolinate. The sequence is that of Quinolinate synthase from Thermus thermophilus (strain ATCC 27634 / DSM 579 / HB8).